A 100-amino-acid chain; its full sequence is Large ribosomal subunit protein uL23 (100 aa).

Belongs to the universal ribosomal protein uL23 family. Part of the 50S ribosomal subunit. Contacts protein L29, and trigger factor when it is bound to the ribosome.

Functionally, one of the early assembly proteins it binds 23S rRNA. One of the proteins that surrounds the polypeptide exit tunnel on the outside of the ribosome. Forms the main docking site for trigger factor binding to the ribosome. This is Large ribosomal subunit protein uL23 from Photorhabdus laumondii subsp. laumondii (strain DSM 15139 / CIP 105565 / TT01) (Photorhabdus luminescens subsp. laumondii).